The following is a 292-amino-acid chain: 33 kDa chaperonin (292 aa).

2 cysteine pairs are disulfide-bonded: Cys-230-Cys-232 and Cys-263-Cys-266.

Belongs to the HSP33 family. In terms of processing, under oxidizing conditions two disulfide bonds are formed involving the reactive cysteines. Under reducing conditions zinc is bound to the reactive cysteines and the protein is inactive.

It localises to the cytoplasm. In terms of biological role, redox regulated molecular chaperone. Protects both thermally unfolding and oxidatively damaged proteins from irreversible aggregation. Plays an important role in the bacterial defense system toward oxidative stress. This Shigella boydii serotype 4 (strain Sb227) protein is 33 kDa chaperonin.